Reading from the N-terminus, the 347-residue chain is CD5 antigen-like (347 aa).

The first 19 residues, 1–19 (MALLFSLILAICTRPGFLA), serve as a signal peptide directing secretion. SRCR domains are found at residues 24–125 (VRLV…ASCE), 138–239 (VRLA…VECE), and 244–346 (LRLV…VICS). 11 disulfide bridges follow: Cys-33-Cys-67, Cys-49-Cys-114, Cys-62-Cys-124, Cys-96-Cys-106, Cys-163-Cys-228, Cys-176-Cys-238, Cys-208-Cys-218, Cys-253-Cys-287, Cys-269-Cys-335, Cys-282-Cys-345, and Cys-315-Cys-325.

As to quaternary structure, interacts with FASN; the interaction is direct. Interacts (via SRCR2 and SRCR3) with pentameric IgM (via Fc region); disulfide-linked. Not N-glycosylated. Probably not O-glycosylated. As to expression, expressed in spleen, lymph node, thymus, bone marrow, and fetal liver, but not in non-lymphoid tissues.

It is found in the secreted. The protein localises to the cytoplasm. In terms of biological role, secreted protein that acts as a key regulator of lipid synthesis: mainly expressed by macrophages in lymphoid and inflamed tissues and regulates mechanisms in inflammatory responses, such as infection or atherosclerosis. Able to inhibit lipid droplet size in adipocytes. Following incorporation into mature adipocytes via CD36-mediated endocytosis, associates with cytosolic FASN, inhibiting fatty acid synthase activity and leading to lipolysis, the degradation of triacylglycerols into glycerol and free fatty acids (FFA). CD5L-induced lipolysis occurs with progression of obesity: participates in obesity-associated inflammation following recruitment of inflammatory macrophages into adipose tissues, a cause of insulin resistance and obesity-related metabolic disease. Regulation of intracellular lipids mediated by CD5L has a direct effect on transcription regulation mediated by nuclear receptors ROR-gamma (RORC). Acts as a key regulator of metabolic switch in T-helper Th17 cells. Regulates the expression of pro-inflammatory genes in Th17 cells by altering the lipid content and limiting synthesis of cholesterol ligand of RORC, the master transcription factor of Th17-cell differentiation. CD5L is mainly present in non-pathogenic Th17 cells, where it decreases the content of polyunsaturated fatty acyls (PUFA), affecting two metabolic proteins MSMO1 and CYP51A1, which synthesize ligands of RORC, limiting RORC activity and expression of pro-inflammatory genes. Participates in obesity-associated autoimmunity via its association with IgM, interfering with the binding of IgM to Fcalpha/mu receptor and enhancing the development of long-lived plasma cells that produce high-affinity IgG autoantibodies. Also acts as an inhibitor of apoptosis in macrophages: promotes macrophage survival from the apoptotic effects of oxidized lipids in case of atherosclerosis. Involved in early response to microbial infection against various pathogens by acting as a pattern recognition receptor and by promoting autophagy. This is CD5 antigen-like (CD5L) from Homo sapiens (Human).